We begin with the raw amino-acid sequence, 572 residues long: Potassium-transporting ATPase potassium-binding subunit (572 aa).

10 helical membrane-spanning segments follow: residues 6–26 (ILFV…GTYI), 66–86 (FFSL…VLLL), 135–155 (ALAV…IVLI), 177–197 (IFWI…FQGV), 251–271 (TIIT…ALTY), 283–303 (GWMI…VMTI), 382–402 (IFGG…LAVF), 428–448 (MFAL…AAVI), 493–513 (ITIA…VMML), and 537–557 (FIFS…TIFP).

Belongs to the KdpA family. The system is composed of three essential subunits: KdpA, KdpB and KdpC.

It is found in the cell inner membrane. Part of the high-affinity ATP-driven potassium transport (or Kdp) system, which catalyzes the hydrolysis of ATP coupled with the electrogenic transport of potassium into the cytoplasm. This subunit binds the periplasmic potassium ions and delivers the ions to the membrane domain of KdpB through an intramembrane tunnel. In Francisella philomiragia subsp. philomiragia (strain ATCC 25017 / CCUG 19701 / FSC 153 / O#319-036), this protein is Potassium-transporting ATPase potassium-binding subunit.